Consider the following 306-residue polypeptide: Epoxyqueuosine reductase (306 aa).

The Proton donor role is filled by aspartate 131. The 4Fe-4S ferredoxin-type domain occupies 173 to 205; the sequence is LDLTYDHPVTDHCGTCTACIDACPTQAIVQPYV. [4Fe-4S] cluster-binding residues include cysteine 185, cysteine 188, cysteine 191, cysteine 195, cysteine 211, cysteine 238, cysteine 241, and cysteine 245.

Belongs to the QueG family. In terms of assembly, monomer. Cob(II)alamin is required as a cofactor. The cofactor is [4Fe-4S] cluster.

The protein localises to the cytoplasm. The catalysed reaction is epoxyqueuosine(34) in tRNA + AH2 = queuosine(34) in tRNA + A + H2O. Its pathway is tRNA modification; tRNA-queuosine biosynthesis. Its function is as follows. Catalyzes the conversion of epoxyqueuosine (oQ) to queuosine (Q), which is a hypermodified base found in the wobble positions of tRNA(Asp), tRNA(Asn), tRNA(His) and tRNA(Tyr). The chain is Epoxyqueuosine reductase from Cellulophaga algicola (strain DSM 14237 / IC166 / ACAM 630).